Here is a 50-residue protein sequence, read N- to C-terminus: Large ribosomal subunit protein eL39 (50 aa).

A compositionally biased stretch (basic residues) spans 1-12; sequence MGKKSKASKKRL. Disordered regions lie at residues 1-20 and 30-50; these read MGKKSKASKKRLAKLERQNS and TNRDVQRNPKRRNWRRNDTDE.

Belongs to the eukaryotic ribosomal protein eL39 family.

In Halobacterium salinarum (strain ATCC 700922 / JCM 11081 / NRC-1) (Halobacterium halobium), this protein is Large ribosomal subunit protein eL39 (rpl39e).